Here is a 466-residue protein sequence, read N- to C-terminus: Reticulophagy regulator 3 (466 aa).

The interval 1 to 28 (MAEAEGVPTTPGPASGSTFRGRRDVSGS) is disordered. Ala2 carries the post-translational modification N-acetylalanine. Topologically, residues 2–80 (AEAEGVPTTP…WCLGLNAAFW (79 aa)) are cytoplasmic. Thr10 is subject to Phosphothreonine. Ser26 carries the post-translational modification Phosphoserine. Residues 81–101 (FFALTSLRLVFLLAFGLMIIV) traverse the membrane as a helical segment. Residues 102–163 (CIDQWKNKIW…FIRNVLLFKK (62 aa)) lie on the Lumenal side of the membrane. The chain crosses the membrane as a helical span at residues 164 to 184 (QNPGKFCLLSCGILTFLAVLG). The Cytoplasmic portion of the chain corresponds to 185–186 (RY). Residues 187 to 207 (VPGLLLSYLMLVTVMMWPLAV) traverse the membrane as a helical segment. The Lumenal portion of the chain corresponds to 208 to 381 (YHRLWDRAYV…ASRDEAALPE (174 aa)). A phosphoserine mark is found at Ser258 and Ser260. Thr283 is modified (phosphothreonine). The disordered stretch occupies residues 284–374 (DSEHSDAEVS…EEPQAPPASR (91 aa)). Phosphoserine is present on residues Ser285, Ser288, Ser293, and Ser303. A compositionally biased stretch (polar residues) spans 294–310 (CTDNGTFNLSRGQTPLT). Residues Thr307 and Thr310 each carry the phosphothreonine modification. 3 positions are modified to phosphoserine: Ser313, Ser320, and Ser360. The span at 316-331 (LDGHSDPEESFARDLP) shows a compositional bias: basic and acidic residues. The chain crosses the membrane as a helical span at residues 382-402 (LLLGALPVGSNLTSNLASLVS). Residues 403–466 (QGMIQLALSG…QLDPASSRSH (64 aa)) lie on the Cytoplasmic side of the membrane. Positions 412 to 466 (GASQPGPSGAPAQRATRGFLRSPSSDLDTDAEGDDFELLDQSELSQLDPASSRSH) are disordered. The segment covering 438-451 (LDTDAEGDDFELLD) has biased composition (acidic residues). Residue Thr440 is modified to Phosphothreonine. An LIR motif motif is present at residues 445–450 (DDFELL). Positions 453 to 466 (SELSQLDPASSRSH) are enriched in polar residues.

Belongs to the RETREG family. As to quaternary structure, interacts with ATG8 family modifier proteins MAP1LC3A, MAP1LC3B, MAP1LC3C, GABARAP, GABARAPL1 and GABARAPL2. Interacts with CANX. Interacts with RTN4 isoform B.

It localises to the endoplasmic reticulum membrane. Functionally, endoplasmic reticulum (ER)-anchored autophagy regulator which exists in an inactive state under basal conditions but is activated following cellular stress. When activated, induces ER fragmentation and mediates ER delivery into lysosomes through sequestration into autophagosomes via interaction with ATG8 family proteins. Promotes ER membrane curvature and ER tubulation required for subsequent ER fragmentation and engulfment into autophagosomes. Required for collagen quality control in a LIR motif-dependent manner. Mediates NRF1-enhanced neurite outgrowth. The sequence is that of Reticulophagy regulator 3 from Homo sapiens (Human).